The primary structure comprises 748 residues: Formate acetyltransferase (748 aa).

The 614-residue stretch at 5 to 618 (NNHTNAWQGF…KTGNTPDGRK (614 aa)) folds into the PFL domain. Cysteine 412 functions as the S-acetylcysteine intermediate in the catalytic mechanism. The Cysteine radical intermediate role is filled by cysteine 413. The Glycine radical domain maps to 625–748 (PGANPMHGRD…VISRTFHESM (124 aa)). Glycine 723 carries the glycine radical modification.

Belongs to the glycyl radical enzyme (GRE) family. PFL subfamily. In terms of assembly, homodimer.

Its subcellular location is the cytoplasm. It catalyses the reaction formate + acetyl-CoA = pyruvate + CoA. Its pathway is fermentation; pyruvate fermentation; formate from pyruvate: step 1/1. Its function is as follows. Catalyzes the conversion of pyruvate to formate and acetyl-CoA. In Staphylococcus epidermidis (strain ATCC 12228 / FDA PCI 1200), this protein is Formate acetyltransferase (pflB).